The sequence spans 777 residues: ATPase ARSA1 (777 aa).

110–117 (KGGVGKTS) serves as a coordination point for ATP. D139 is a catalytic residue. Residues N372 and 454-461 (KGGVGKTS) contribute to the ATP site. The active site involves D483. Position 712 (N712) interacts with ATP.

Belongs to the arsA ATPase family. In terms of assembly, monomer. Interacts with TOC34.

Its subcellular location is the cytoplasm. It is found in the cytosol. Its function is as follows. ATPase required for the post-translational delivery of tail-anchored (TA) proteins to the chloroplast. Required for the accumulation of TOC34, an essential component of the outer chloroplast membrane translocon (TOC) complex. Recognizes and selectively binds the transmembrane domain of TA proteins in the cytosol. This complex then targets to chloroplast, where the tail-anchored protein is released for insertion. This process is regulated by ATP binding and hydrolysis. The chain is ATPase ARSA1 from Chlamydomonas reinhardtii (Chlamydomonas smithii).